The following is a 166-amino-acid chain: 3-isopropylmalate dehydratase small subunit 2 (166 aa).

Belongs to the LeuD family. LeuD type 2 subfamily. As to quaternary structure, heterodimer of LeuC and LeuD.

The enzyme catalyses (2R,3S)-3-isopropylmalate = (2S)-2-isopropylmalate. The protein operates within amino-acid biosynthesis; L-leucine biosynthesis; L-leucine from 3-methyl-2-oxobutanoate: step 2/4. Functionally, catalyzes the isomerization between 2-isopropylmalate and 3-isopropylmalate, via the formation of 2-isopropylmaleate. This Thermotoga maritima (strain ATCC 43589 / DSM 3109 / JCM 10099 / NBRC 100826 / MSB8) protein is 3-isopropylmalate dehydratase small subunit 2 (leuD2).